The chain runs to 89 residues: MSVADIKKSEVVAQFARGTNDTGSPEVQVALLTARIVELTGHFKTHAKDHHSRRGLLRMVSRRRKLLDYLKGKDADRYRALIEKLGLRK.

This sequence belongs to the universal ribosomal protein uS15 family. Part of the 30S ribosomal subunit. Forms a bridge to the 50S subunit in the 70S ribosome, contacting the 23S rRNA.

Its function is as follows. One of the primary rRNA binding proteins, it binds directly to 16S rRNA where it helps nucleate assembly of the platform of the 30S subunit by binding and bridging several RNA helices of the 16S rRNA. Forms an intersubunit bridge (bridge B4) with the 23S rRNA of the 50S subunit in the ribosome. In Burkholderia ambifaria (strain MC40-6), this protein is Small ribosomal subunit protein uS15.